The primary structure comprises 504 residues: Cytochrome P450 4A25 (504 aa).

Helical transmembrane passes span 6–26 (LASA…LLLL) and 110–130 (APVL…LLNG). C451 is a heme binding site.

The protein belongs to the cytochrome P450 family. Requires heme as cofactor.

The protein resides in the endoplasmic reticulum membrane. The enzyme catalyses an omega-methyl-long-chain fatty acid + reduced [NADPH--hemoprotein reductase] + O2 = an omega-hydroxy-long-chain fatty acid + oxidized [NADPH--hemoprotein reductase] + H2O + H(+). Functionally, catalyzes the omega- and (omega-1)-hydroxylation of various fatty acids such as laurate and palmitate. Has no activity toward taurochenodeoxycholic acid. In Sus scrofa (Pig), this protein is Cytochrome P450 4A25 (CYP4A25).